The chain runs to 270 residues: Endochitinase PR4 (270 aa).

An N-terminal signal peptide occupies residues 1 to 23 (MGNKLVLVLVAVALVMGPKNVSA). One can recognise a Chitin-binding type-1 domain in the interval 24–58 (QNCGCAEGLCCSQYGYCGTGEDYCGTGCQQGPCTT). 7 disulfide bridges follow: C26–C34, C28–C40, C33–C47, C51–C56, C88–C137, C150–C160, and C238–C270. E132 serves as the catalytic Proton donor.

The protein belongs to the glycosyl hydrolase 19 family. Chitinase class I subfamily.

The catalysed reaction is Random endo-hydrolysis of N-acetyl-beta-D-glucosaminide (1-&gt;4)-beta-linkages in chitin and chitodextrins.. Defense against chitin-containing fungal pathogens. This Phaseolus vulgaris (Kidney bean) protein is Endochitinase PR4 (CHI4).